The following is a 227-amino-acid chain: UPF0758 protein Psyc_1834 (227 aa).

In terms of domain architecture, MPN spans 102–224 (GLGRSQMVKD…TLSYAENCLA (123 aa)). His-173, His-175, and Asp-186 together coordinate Zn(2+). The JAMM motif motif lies at 173–186 (HNHPHTDATPSTAD).

It belongs to the UPF0758 family.

The protein is UPF0758 protein Psyc_1834 of Psychrobacter arcticus (strain DSM 17307 / VKM B-2377 / 273-4).